The primary structure comprises 989 residues: DNA-binding protein SMUBP-2 (989 aa).

Ala2 carries the post-translational modification N-acetylalanine. Residues 213–220 (GPPGTGKT), Gln402, Tyr441, and Glu570 each bind ATP. The SS DNA-binding stretch occupies residues 637 to 783 (TAFEYLDDIV…KARHITVSRK (147 aa)). Disordered stretches follow at residues 650 to 717 (YTHE…GCDR), 765 to 818 (LRHD…GQPH), and 833 to 869 (LQRQQGSQAQPAKAQPGVGLHPQKTQQKKKKKETKGP). A compositionally biased stretch (low complexity) spans 677–690 (EQENGQEARAAAGQ). The 64-residue stretch at 721-784 (IDRTEHFRAM…ARHITVSRKS (64 aa)) folds into the R3H domain. The segment covering 765 to 775 (LRHDSTGEGKA) has biased composition (basic and acidic residues). A phosphoserine mark is found at Ser797 and Ser800. The span at 833–842 (LQRQQGSQAQ) shows a compositional bias: low complexity. Residues 860-864 (KKKKK) carry the Nuclear localization signal motif. The segment at 885–934 (IKADNTCSFAKCTASTTTLGQFCMHCSRRYCLSHHLPEIHGCGEKARAHA) adopts an AN1-type zinc-finger fold. 8 residues coordinate Zn(2+): Cys891, Cys896, Cys907, Cys910, Cys915, His918, His924, and Cys926. The segment covering 954–972 (ALDPAKRAQLQRRLDKKLG) has biased composition (basic and acidic residues). Residues 954–989 (ALDPAKRAQLQRRLDKKLGELSSQRTSKRKEKERGT) are disordered.

Belongs to the DNA2/NAM7 helicase family. As to quaternary structure, homooligomer. Interacts with RUVBL1. Interacts with RUVBL2. Interacts with GTF3C1. Interacts with ABT1. Interacts with ribosomes. High expression in brain and testis, moderate in heart, spleen, and kidney, and low in other tissues.

The protein localises to the nucleus. Its subcellular location is the cytoplasm. It is found in the cell projection. The protein resides in the axon. The catalysed reaction is ATP + H2O = ADP + phosphate + H(+). Functionally, 5' to 3' helicase that unwinds RNA and DNA duplexes in an ATP-dependent reaction. Specific to 5'-phosphorylated single-stranded guanine-rich sequences. May play a role in RNA metabolism, ribosome biogenesis or initiation of translation. May play a role in regulation of transcription. Interacts with tRNA-Tyr. This Mesocricetus auratus (Golden hamster) protein is DNA-binding protein SMUBP-2 (IGHMBP2).